Here is a 428-residue protein sequence, read N- to C-terminus: C4-dicarboxylate transport protein (428 aa).

8 helical membrane-spanning segments follow: residues 8–28 (SLYF…HFYP), 44–64 (LIKM…IAGM), 76–96 (VALL…LIIV), 142–162 (IGAF…LFGF), 184–204 (VIFG…FGAM), 222–242 (LIIC…GSIA), 326–346 (IVHQ…AAGV), and 352–372 (IVLA…LALI).

Belongs to the dicarboxylate/amino acid:cation symporter (DAACS) (TC 2.A.23) family.

Its subcellular location is the cell inner membrane. Its function is as follows. Responsible for the transport of dicarboxylates such as succinate, fumarate, and malate from the periplasm across the membrane. The protein is C4-dicarboxylate transport protein of Escherichia coli O127:H6 (strain E2348/69 / EPEC).